The sequence spans 186 residues: Pyridoxal 5'-phosphate synthase subunit PdxT (186 aa).

46-48 (GES) lines the L-glutamine pocket. Cys75 functions as the Nucleophile in the catalytic mechanism. L-glutamine contacts are provided by residues Arg101 and 127–128 (IR). Active-site charge relay system residues include His164 and Glu166.

This sequence belongs to the glutaminase PdxT/SNO family. In terms of assembly, in the presence of PdxS, forms a dodecamer of heterodimers. Only shows activity in the heterodimer.

It catalyses the reaction aldehydo-D-ribose 5-phosphate + D-glyceraldehyde 3-phosphate + L-glutamine = pyridoxal 5'-phosphate + L-glutamate + phosphate + 3 H2O + H(+). It carries out the reaction L-glutamine + H2O = L-glutamate + NH4(+). The protein operates within cofactor biosynthesis; pyridoxal 5'-phosphate biosynthesis. Functionally, catalyzes the hydrolysis of glutamine to glutamate and ammonia as part of the biosynthesis of pyridoxal 5'-phosphate. The resulting ammonia molecule is channeled to the active site of PdxS. The protein is Pyridoxal 5'-phosphate synthase subunit PdxT of Methanococcus aeolicus (strain ATCC BAA-1280 / DSM 17508 / OCM 812 / Nankai-3).